The chain runs to 377 residues: tRNA/tmRNA (uracil-C(5))-methyltransferase (377 aa).

Residues Gln-199, Tyr-227, Asn-232, Glu-248, and Asp-308 each coordinate S-adenosyl-L-methionine. The Nucleophile role is filled by Cys-333. Catalysis depends on Glu-367, which acts as the Proton acceptor.

It belongs to the class I-like SAM-binding methyltransferase superfamily. RNA M5U methyltransferase family. TrmA subfamily.

It carries out the reaction uridine(54) in tRNA + S-adenosyl-L-methionine = 5-methyluridine(54) in tRNA + S-adenosyl-L-homocysteine + H(+). The catalysed reaction is uridine(341) in tmRNA + S-adenosyl-L-methionine = 5-methyluridine(341) in tmRNA + S-adenosyl-L-homocysteine + H(+). In terms of biological role, dual-specificity methyltransferase that catalyzes the formation of 5-methyluridine at position 54 (m5U54) in all tRNAs, and that of position 341 (m5U341) in tmRNA (transfer-mRNA). The protein is tRNA/tmRNA (uracil-C(5))-methyltransferase of Aeromonas hydrophila subsp. hydrophila (strain ATCC 7966 / DSM 30187 / BCRC 13018 / CCUG 14551 / JCM 1027 / KCTC 2358 / NCIMB 9240 / NCTC 8049).